A 304-amino-acid chain; its full sequence is Acetyl-coenzyme A carboxylase carboxyl transferase subunit beta (304 aa).

Residues 23–292 enclose the CoA carboxyltransferase N-terminal domain; it reads VWTKCDSCGQ…PNPEAPREGV (270 aa). Zn(2+) contacts are provided by C27, C30, C46, and C49. The C4-type zinc-finger motif lies at 27-49; it reads CDSCGQVLYRAELERNLEVCPKC. The disordered stretch occupies residues 285–304; that stretch reads PEAPREGVVVPPVPDQEPEA. Residues 295–304 are compositionally biased toward pro residues; the sequence is PPVPDQEPEA.

It belongs to the AccD/PCCB family. As to quaternary structure, acetyl-CoA carboxylase is a heterohexamer composed of biotin carboxyl carrier protein (AccB), biotin carboxylase (AccC) and two subunits each of ACCase subunit alpha (AccA) and ACCase subunit beta (AccD). The cofactor is Zn(2+).

It is found in the cytoplasm. It catalyses the reaction N(6)-carboxybiotinyl-L-lysyl-[protein] + acetyl-CoA = N(6)-biotinyl-L-lysyl-[protein] + malonyl-CoA. It functions in the pathway lipid metabolism; malonyl-CoA biosynthesis; malonyl-CoA from acetyl-CoA: step 1/1. In terms of biological role, component of the acetyl coenzyme A carboxylase (ACC) complex. Biotin carboxylase (BC) catalyzes the carboxylation of biotin on its carrier protein (BCCP) and then the CO(2) group is transferred by the transcarboxylase to acetyl-CoA to form malonyl-CoA. The protein is Acetyl-coenzyme A carboxylase carboxyl transferase subunit beta of Shigella sonnei (strain Ss046).